The following is a 765-amino-acid chain: Endothelin-converting enzyme 2 (765 aa).

Residues 1–60 (MSVALQELGGGGNMVEYKRATLRDEDAPETPVEGGASPDAVEAGFRKRTSRLLGLHTQLE) are Cytoplasmic-facing. A helical; Signal-anchor for type II membrane protein membrane pass occupies residues 61 to 81 (LVLAGVSLLLAALLLGCLVAL). Residues 82-765 (GVQYHRDPSH…MNSGQLCEVW (684 aa)) are Lumenal-facing. The Peptidase M13 domain occupies 93–765 (TCLTEACIRV…MNSGQLCEVW (673 aa)). Cystine bridges form between Cys94–Cys99, Cys117–Cys750, Cys125–Cys710, Cys181–Cys430, and Cys639–Cys762. Asn161, Asn165, Asn206, Asn266, Asn311, Asn378, and Asn534 each carry an N-linked (GlcNAc...) asparagine glycan. Residue His602 participates in Zn(2+) binding. Glu603 is a catalytic residue. Position 606 (His606) interacts with Zn(2+). Asn627 and Asn635 each carry an N-linked (GlcNAc...) asparagine glycan. Glu662 is a binding site for Zn(2+). Catalysis depends on Asp666, which acts as the Proton donor.

Belongs to the peptidase M13 family. The cofactor is Zn(2+). In terms of tissue distribution, isoform ECE2-1 and isoform ECE2-2 are expressed in brain and adrenal gland.

It is found in the golgi apparatus membrane. It localises to the cytoplasmic vesicle. Its subcellular location is the secretory vesicle membrane. The enzyme catalyses Hydrolysis of the 21-Trp-|-Val-22 bond in big endothelin to form endothelin 1.. Its function is as follows. Converts big endothelin-1 to endothelin-1. Also involved in the processing of various neuroendocrine peptides, including neurotensin, angiotensin I, substance P, proenkephalin-derived peptides, and prodynorphin-derived peptides. May play a role in amyloid-beta processing. The chain is Endothelin-converting enzyme 2 from Bos taurus (Bovine).